Reading from the N-terminus, the 333-residue chain is Complement C1q and tumor necrosis factor-related protein 9B (333 aa).

The signal sequence occupies residues 1-19 (MRIWWLLLAIEICTGNINS). Collagen-like domains are found at residues 24–82 (RQGH…DGKV), 95–154 (GSPG…PGPM), and 155–191 (GPIGKPGPKGEAGPTGPQGEPGVRGIRGWKGDRGEKG). Residues 24 to 189 (RQGHPGIPGN…IRGWKGDRGE (166 aa)) are disordered. Over residues 26 to 40 (GHPGIPGNPGHNGLP) the composition is skewed to low complexity. Basic and acidic residues-rich tracts occupy residues 42–55 (RDGRDGAKGDKGDA) and 69–88 (TSGEKGERGADGKVEAKGIK). In terms of domain architecture, C1q spans 197 to 333 (LVLPKSAFTV…FTGFLLFSSQ (137 aa)).

As to quaternary structure, interacts with CTRP9A and ADIPOQ. Forms heterotrimers and heterooligomeric complexes with CTRP9A. As to expression, expressed at low levels. Not expressed in adipose tissues.

The protein localises to the secreted. Its function is as follows. Probable adipokine. Activates AMPK, AKT, and p44/42 MAPK signaling pathways. This chain is Complement C1q and tumor necrosis factor-related protein 9B (C1QTNF9B), found in Homo sapiens (Human).